Reading from the N-terminus, the 310-residue chain is Beta-carotene 3-hydroxylase 1, chloroplastic (310 aa).

The transit peptide at 1–51 (MAAGLSTAVTFKPLHRSFSSSSTDFRLRLPKSLSGFSPSLRFKRFSVCYVV) directs the protein to the chloroplast. The next 2 membrane-spanning stretches (helical) occupy residues 98–118 (YLIAAMLSSFGITSMAVMAVY) and 132–152 (MLEMFGTFALSVGAAVGMEFW). A Fatty acid hydroxylase domain is found at 145-272 (AAVGMEFWAR…KFNGVPYGLF (128 aa)). The short motif at 157–162 (HRALWH) is the Histidine box-1 element. The Histidine box-2 signature appears at 169 to 173 (HESHH). The next 2 membrane-spanning stretches (helical) occupy residues 183-203 (NDVFAIVNAGPAIGLLSYGFF) and 208-228 (VPGLCFGAGLGITVFGIAYMF). Residues 230–235 (HDGLVH) carry the Histidine box-3 motif. Positions 256 to 260 (HQLHH) match the Histidine box-4 motif.

The protein belongs to the sterol desaturase family. Homodimer. As to expression, expressed in leaves, flowers, stems, roots and siliques.

The protein resides in the plastid. It localises to the chloroplast membrane. It carries out the reaction all-trans-beta-carotene + 4 reduced [2Fe-2S]-[ferredoxin] + 2 O2 + 4 H(+) = all-trans-zeaxanthin + 4 oxidized [2Fe-2S]-[ferredoxin] + 2 H2O. Functionally, nonheme diiron monooxygenase involved in the biosynthesis of xanthophylls. Specific for beta-ring hydroxylations of beta-carotene. Also has a low activity toward the beta- and epsilon-rings of alpha-carotene. No activity with acyclic carotenoids such as lycopene and neurosporene. Uses ferredoxin as an electron donor. This Arabidopsis thaliana (Mouse-ear cress) protein is Beta-carotene 3-hydroxylase 1, chloroplastic (BETA-OHASE 1).